A 424-amino-acid chain; its full sequence is Histidine--tRNA ligase (424 aa).

Belongs to the class-II aminoacyl-tRNA synthetase family. In terms of assembly, homodimer.

It localises to the cytoplasm. It carries out the reaction tRNA(His) + L-histidine + ATP = L-histidyl-tRNA(His) + AMP + diphosphate + H(+). In Staphylococcus epidermidis (strain ATCC 12228 / FDA PCI 1200), this protein is Histidine--tRNA ligase.